Reading from the N-terminus, the 151-residue chain is Large ribosomal subunit protein uL15 (151 aa).

The protein belongs to the universal ribosomal protein uL15 family. As to quaternary structure, part of the 50S ribosomal subunit.

In terms of biological role, binds to the 23S rRNA. This Hyperthermus butylicus (strain DSM 5456 / JCM 9403 / PLM1-5) protein is Large ribosomal subunit protein uL15.